The chain runs to 233 residues: DnaA regulatory inactivator Hda (233 aa).

Belongs to the DnaA family. HdA subfamily. The active form seems to be an ADP-bound monomer. Forms the RIDA complex (regulatory inactivation of DnaA) of ATP-DnaA, ADP-Hda and the DNA-loaded beta sliding clamp (dnaN).

Mediates the interaction of DNA replication initiator protein DnaA with DNA polymerase subunit beta sliding clamp (dnaN). Stimulates hydrolysis of ATP-DnaA to ADP-DnaA, rendering DnaA inactive for reinitiation, a process called regulatory inhibition of DnaA or RIDA. The protein is DnaA regulatory inactivator Hda of Escherichia fergusonii (strain ATCC 35469 / DSM 13698 / CCUG 18766 / IAM 14443 / JCM 21226 / LMG 7866 / NBRC 102419 / NCTC 12128 / CDC 0568-73).